A 73-amino-acid polypeptide reads, in one-letter code: Translation initiation factor IF-1 (73 aa).

In terms of domain architecture, S1-like spans 1-73 (MAKKEGALEL…TRGRIVYRHK (73 aa)).

This sequence belongs to the IF-1 family. In terms of assembly, component of the 30S ribosomal translation pre-initiation complex which assembles on the 30S ribosome in the order IF-2 and IF-3, IF-1 and N-formylmethionyl-tRNA(fMet); mRNA recruitment can occur at any time during PIC assembly.

Its subcellular location is the cytoplasm. Its function is as follows. One of the essential components for the initiation of protein synthesis. Stabilizes the binding of IF-2 and IF-3 on the 30S subunit to which N-formylmethionyl-tRNA(fMet) subsequently binds. Helps modulate mRNA selection, yielding the 30S pre-initiation complex (PIC). Upon addition of the 50S ribosomal subunit IF-1, IF-2 and IF-3 are released leaving the mature 70S translation initiation complex. In Cutibacterium acnes (strain DSM 16379 / KPA171202) (Propionibacterium acnes), this protein is Translation initiation factor IF-1.